The primary structure comprises 380 residues: Gonadotropin-releasing hormone II receptor (380 aa).

Residues 1–40 are Extracellular-facing; that stretch reads MSAVNGTPWGSSAREEVWAGSGVEVEGSELPTFSTAAKVR. Residues 41–60 traverse the membrane as a helical segment; that stretch reads VGVTIVLFVSSAGGNLAVLW. At 61–76 the chain is on the cytoplasmic side; it reads SVTRPQPSQLRPSPVR. A helical membrane pass occupies residues 77–96; sequence RLFAHLAAADLLVTFVVMPL. The Extracellular segment spans residues 97–114; it reads DATWNITVQWLAGDIACR. Residue asparagine 101 is glycosylated (N-linked (GlcNAc...) asparagine). An intrachain disulfide couples cysteine 113 to cysteine 188. A helical membrane pass occupies residues 115 to 136; that stretch reads TLMFLKLMAMYAAAFLPVVIGL. The Cytoplasmic portion of the chain corresponds to 137–160; it reads DRQAAVLNPLGSRSGVRKLLGAAW. Residues 161–178 traverse the membrane as a helical segment; sequence GLSFLLALPQLFLFHTVH. Topologically, residues 179–204 are extracellular; sequence RAGPVPFTQCATKGSFKARWQETTYN. A helical membrane pass occupies residues 205–224; that stretch reads LFTFCCLFLLPLTAMAICYS. Over 225–278 the chain is Cytoplasmic; that stretch reads RIVLGVSSPRTRKGSHAPAGEFALRRSFDNRPRVRLRALRLALLVLLTFILCWT. The helical transmembrane segment at 279–297 threads the bilayer; that stretch reads PYYLLGLWYWFSPSMLSEV. Residues 298 to 303 lie on the Extracellular side of the membrane; it reads PPSLSH. Residues 304–323 form a helical membrane-spanning segment; that stretch reads ILFLFGLLNAPLDPLLYGAF. Residues 324 to 380 lie on the Cytoplasmic side of the membrane; that stretch reads TLGCRRGHQELSMDSSREEGSRRMFQQDIQALRQTEVQKTVTSRKAGETKDIPITSI.

It belongs to the G-protein coupled receptor 1 family. Post-translationally, phosphorylated on the C-terminal cytoplasmic tail.

It localises to the cell membrane. In terms of biological role, receptor for gonadotropin releasing hormone II (GnRH II). This receptor mediates its action by association with G proteins that activate a phosphatidylinositol-calcium second messenger system. This Callithrix jacchus (White-tufted-ear marmoset) protein is Gonadotropin-releasing hormone II receptor (GNRHR2).